The sequence spans 189 residues: Elongation factor P (189 aa).

At K34 the chain carries N6-(3,6-diaminohexanoyl)-5-hydroxylysine.

It belongs to the elongation factor P family. In terms of processing, may be beta-lysylated on the epsilon-amino group of Lys-34 by the combined action of EpmA and EpmB, and then hydroxylated on the C5 position of the same residue by EpmC (if this protein is present). Lysylation is critical for the stimulatory effect of EF-P on peptide-bond formation. The lysylation moiety may extend toward the peptidyltransferase center and stabilize the terminal 3-CCA end of the tRNA. Hydroxylation of the C5 position on Lys-34 may allow additional potential stabilizing hydrogen-bond interactions with the P-tRNA.

It localises to the cytoplasm. It participates in protein biosynthesis; polypeptide chain elongation. Its function is as follows. Involved in peptide bond synthesis. Alleviates ribosome stalling that occurs when 3 or more consecutive Pro residues or the sequence PPG is present in a protein, possibly by augmenting the peptidyl transferase activity of the ribosome. Modification of Lys-34 is required for alleviation. This chain is Elongation factor P, found in Teredinibacter turnerae (strain ATCC 39867 / T7901).